Consider the following 620-residue polypeptide: Protein phosphatase 2C-like domain-containing protein 1 (620 aa).

In terms of domain architecture, PPM-type phosphatase spans 173–611 (GIAICSNNNS…DSITVMVMFL (439 aa)).

It belongs to the PP2C family.

This Mus musculus (Mouse) protein is Protein phosphatase 2C-like domain-containing protein 1 (Pp2d1).